The primary structure comprises 335 residues: Tryptophan--tRNA ligase (335 aa).

Residues 9–11 (QST) and 17–18 (GN) contribute to the ATP site. The 'HIGH' region signature appears at 10–18 (STNSLTLGN). Residue D137 participates in L-tryptophan binding. ATP is bound by residues 149–151 (GKD), I189, and 198–202 (KMSKS). The 'KMSKS' region motif lies at 198 to 202 (KMSKS).

This sequence belongs to the class-I aminoacyl-tRNA synthetase family. Homodimer.

It is found in the cytoplasm. The catalysed reaction is tRNA(Trp) + L-tryptophan + ATP = L-tryptophyl-tRNA(Trp) + AMP + diphosphate + H(+). Functionally, catalyzes the attachment of tryptophan to tRNA(Trp). The sequence is that of Tryptophan--tRNA ligase from Malacoplasma penetrans (strain HF-2) (Mycoplasma penetrans).